The sequence spans 101 residues: Small ribosomal subunit protein uS14 (101 aa).

The interval 52 to 72 (PRDSSPVRQRRRCRSTGRPRG) is disordered. Residues 59–72 (RQRRRCRSTGRPRG) are compositionally biased toward basic residues.

The protein belongs to the universal ribosomal protein uS14 family. As to quaternary structure, part of the 30S ribosomal subunit. Contacts proteins S3 and S10.

Binds 16S rRNA, required for the assembly of 30S particles and may also be responsible for determining the conformation of the 16S rRNA at the A site. The polypeptide is Small ribosomal subunit protein uS14 (Nitrosococcus oceani (strain ATCC 19707 / BCRC 17464 / JCM 30415 / NCIMB 11848 / C-107)).